The following is a 444-amino-acid chain: Acyl-CoA 6-desaturase (444 aa).

Residues 1–131 lie on the Cytoplasmic side of the membrane; sequence MGKGGNQGEG…DMNLFKTNHV (131 aa). A Cytochrome b5 heme-binding domain is found at 18-95; that stretch reads VPTFSWEEIQ…LKPLLIGELA (78 aa). Residues 132-152 traverse the membrane as a helical segment; sequence FFLLLLAHIIALESIAWFTVF. Residues 153-157 lie on the Lumenal side of the membrane; it reads YFGNG. The chain crosses the membrane as a helical span at residues 158 to 178; the sequence is WISTLITAFVLATSQAQAGWL. Over 179–264 the chain is Cytoplasmic; it reads QHDYGHLSVY…KYLPYNHQHE (86 aa). Positions 180–184 match the Histidine box-1 motif; it reads HDYGH. Residues 217–221 carry the Histidine box-2 motif; it reads HFQHH. A helical membrane pass occupies residues 265-285; sequence YFFLIGPPLLIPMYFQYQIIM. Topologically, residues 286 to 305 are lumenal; that stretch reads TMIVHKNWVDLAWAISYYIR. Residues 306-326 form a helical membrane-spanning segment; the sequence is FFITYIPFYGILGALLFLNFI. The Cytoplasmic portion of the chain corresponds to 327 to 444; that stretch reads RFLESHWFVW…KLWLDAYLHK (118 aa). A Histidine box-3 motif is present at residues 382-386; the sequence is QIEHH.

The protein belongs to the fatty acid desaturase type 1 family.

It is found in the endoplasmic reticulum membrane. It carries out the reaction (9Z,12Z)-octadecadienoyl-CoA + 2 Fe(II)-[cytochrome b5] + O2 + 2 H(+) = (6Z,9Z,12Z)-octadecatrienoyl-CoA + 2 Fe(III)-[cytochrome b5] + 2 H2O. The enzyme catalyses (9Z,12Z,15Z)-octadecatrienoyl-CoA + 2 Fe(II)-[cytochrome b5] + O2 + 2 H(+) = (6Z,9Z,12Z,15Z)-octadecatetraenoyl-CoA + 2 Fe(III)-[cytochrome b5] + 2 H2O. It catalyses the reaction (9Z,12Z,15Z,18Z,21Z)-tetracosapentaenoyl-CoA + 2 Fe(II)-[cytochrome b5] + O2 + 2 H(+) = (6Z,9Z,12Z,15Z,18Z,21Z)-tetracosahexaenoyl-CoA + 2 Fe(III)-[cytochrome b5] + 2 H2O. The catalysed reaction is (11E)-octadecenoyl-CoA + 2 Fe(II)-[cytochrome b5] + O2 + 2 H(+) = (6Z,11E)-octadecadienoyl-CoA + 2 Fe(III)-[cytochrome b5] + 2 H2O. It carries out the reaction (11Z,14Z)-eicosadienoyl-CoA + 2 Fe(II)-[cytochrome b5] + O2 + 2 H(+) = (8Z,11Z,14Z)-eicosatrienoyl-CoA + 2 Fe(III)-[cytochrome b5] + 2 H2O. The enzyme catalyses (11Z,14Z,17Z)-eicosatrienoyl-CoA + 2 Fe(II)-[cytochrome b5] + O2 + 2 H(+) = (8Z,11Z,14Z,17Z)-eicosatetraenoyl-CoA + 2 Fe(III)-[cytochrome b5] + 2 H2O. It participates in lipid metabolism; polyunsaturated fatty acid biosynthesis. In terms of biological role, involved in the biosynthesis of highly unsaturated fatty acids (HUFA) from the essential polyunsaturated fatty acids (PUFA) linoleic acid (LA) (18:2n-6) and alpha-linolenic acid (ALA) (18:3n-3) precursors, acting as a fatty acyl-coenzyme A (CoA) desaturase that introduces a cis double bond at carbon 6 of the fatty acyl chain. Catalyzes the first and rate limiting step in this pathway which is the desaturation of LA (18:2n-6) and ALA (18:3n-3) into gamma-linoleate (GLA) (18:3n-6) and stearidonate (18:4n-3), respectively. Subsequently, in the biosynthetic pathway of HUFA n-3 series, it desaturates tetracosapentaenoate (24:5n-3) to tetracosahexaenoate (24:6n-3), which is then converted to docosahexaenoate (DHA)(22:6n-3), an important lipid for nervous system function. It can also desaturate (11E)-octadecenoate (trans-vaccenoate) at carbon 6 generating (6Z,11E)-octadecadienoate. In addition to Delta-6 activity, this enzyme exhibits Delta-8 activity with slight biases toward n-3 fatty acyl-CoA substrates. The sequence is that of Acyl-CoA 6-desaturase (FADS2) from Pongo abelii (Sumatran orangutan).